A 285-amino-acid chain; its full sequence is NADPH-dependent 7-cyano-7-deazaguanine reductase (285 aa).

91–93 (IES) lines the substrate pocket. Residue 93–94 (SK) participates in NADPH binding. C191 functions as the Thioimide intermediate in the catalytic mechanism. Catalysis depends on D198, which acts as the Proton donor. 230-231 (HE) is a binding site for substrate. 259-260 (RG) lines the NADPH pocket.

The protein belongs to the GTP cyclohydrolase I family. QueF type 2 subfamily. Homodimer.

The protein resides in the cytoplasm. The catalysed reaction is 7-aminomethyl-7-carbaguanine + 2 NADP(+) = 7-cyano-7-deazaguanine + 2 NADPH + 3 H(+). Its pathway is tRNA modification; tRNA-queuosine biosynthesis. In terms of biological role, catalyzes the NADPH-dependent reduction of 7-cyano-7-deazaguanine (preQ0) to 7-aminomethyl-7-deazaguanine (preQ1). The protein is NADPH-dependent 7-cyano-7-deazaguanine reductase of Legionella pneumophila (strain Paris).